Consider the following 421-residue polypeptide: Ankyrin repeat domain-containing protein 61 (421 aa).

ANK repeat units lie at residues Thr27–Leu57, Gln74–Val103, Gln107–Leu146, Asn166–Ala195, Ser199–Cys228, Thr233–Ala272, Glu276–Ile305, and Asn309–Leu342.

In Mus musculus (Mouse), this protein is Ankyrin repeat domain-containing protein 61 (Ankrd61).